The chain runs to 761 residues: Zinc finger protein 711 (761 aa).

Residues K224, K235, and K296 each participate in a glycyl lysine isopeptide (Lys-Gly) (interchain with G-Cter in SUMO2) cross-link. C2H2-type zinc fingers lie at residues 383–408 (YPCH…HPDH), 414–436 (YQCT…LESH), 476–499 (HKCK…LAVH), 505–527 (HVCV…MRTH), and 533–556 (YQCQ…KSKH). Positions 515-761 (RHPSELKKHM…IMRHHKEALM (247 aa)) are required for transcriptional activation. The segment at 562–584 (YKCEHCPQAFGDERELQRHLDLF) adopts a C2H2-type 6; atypical zinc-finger fold. The Zn(2+) site is built by C564, C567, and H580. 6 C2H2-type zinc fingers span residues 590 to 613 (HQCP…ISVH), 619 to 641 (HKCE…SDIH), 647 to 670 (HQCR…LSVH), 676 to 698 (LKCK…MKTH), 704 to 727 (YQCE…ISIH), and 733 to 755 (HRCE…IMRH).

Belongs to the krueppel C2H2-type zinc-finger protein family. Interacts with PHF8. Expressed in neural tissues.

It is found in the nucleus. Functionally, transcription regulator required for brain development. Probably acts as a transcription factor that binds to the promoter of target genes and recruits PHF8 histone demethylase, leading to activated expression of genes involved in neuron development, such as KDM5C. May compete with transcription factor ARX for activation of expression of KDM5C. This chain is Zinc finger protein 711 (ZNF711), found in Homo sapiens (Human).